Consider the following 305-residue polypeptide: Thyroxine 5-deiodinase (305 aa).

The Cytoplasmic portion of the chain corresponds to 1–43; the sequence is MPGQAGRRRLVGGGCRGSQGPLGGAATMLRSLLLHSLRLCAQT. The helical; Signal-anchor for type II membrane protein transmembrane segment at 44-63 threads the bilayer; the sequence is ASCLVLFPRFLGTACMLWLL. Over 64 to 305 the chain is Extracellular; the sequence is DFLCIRKHLL…QLHGPQPRRV (242 aa). The interval 79–98 is disordered; it reads GEPETEVELNSDGDEVPPDD. Acidic residues predominate over residues 82–96; that stretch reads ETEVELNSDGDEVPP. Residue U171 is part of the active site. Residue U171 is a non-standard amino acid, selenocysteine.

It belongs to the iodothyronine deiodinase family. In terms of assembly, monomer. Homodimer. May undergo minor heretodimerization with DIO1 and DIO2. As to expression, expressed in brain only.

It is found in the cell membrane. The protein localises to the endosome membrane. It catalyses the reaction 3,3',5'-triiodo-L-thyronine + iodide + A + H(+) = L-thyroxine + AH2. It carries out the reaction 3,3'-diiodo-L-thyronine + iodide + A + H(+) = 3,3',5-triiodo-L-thyronine + AH2. The catalysed reaction is 3-iodo-L-thyronine + iodide + A + H(+) = 3,5-diiodo-L-thyronine + AH2. The enzyme catalyses L-thyronine + iodide + A + H(+) = 3-iodo-L-thyronine + AH2. It catalyses the reaction 3',5'-diiodo-L-thyronine + iodide + A + H(+) = 3,3',5'-triiodo-L-thyronine + AH2. It carries out the reaction 3'-iodo-L-thyronine + iodide + A + H(+) = 3,3'-diiodo-L-thyronine + AH2. The catalysed reaction is 3,3',5'-triiodothyronamine + iodide + A + H(+) = 3,3',5,5'-tetraiodothyronamine + AH2. The enzyme catalyses 3',5'-diiodothyronamine + iodide + A + H(+) = 3,3',5'-triiodothyronamine + AH2. It catalyses the reaction 3,3'-diiodothyronamine + iodide + A + H(+) = 3,3',5-triiodothyronamine + AH2. It carries out the reaction 3-iodothyronamine + iodide + A + H(+) = 3,5-diiodothyronamine + AH2. The catalysed reaction is 3'-iodothyronamine + iodide + A + H(+) = 3,3'-diiodothyronamine + AH2. The enzyme catalyses thyronamine + iodide + A + H(+) = 3-iodothyronamine + AH2. Functionally, plays a crucial role in the metabolism of thyroid hormones (TH) and has specific roles in TH activation and inactivation by deiodination, particularly in different tissues. Catalyzes the deiodination of L-thyroxine (T4) to 3,3',5'-triiodothyronine (rT3), 3,5-diiodothyronine (3,5-T2) to 3-monoiodothyronine (3-T1), rT3 to 3',5'-diiodothyronine (3',5'-T2) and 3,3'-diiodothyronine (3,3'-T2) to 3'-monoiodothyronine (3'-T1) via inner-ring deiodination (IRD). Catalyzes the deiodination of 3,5,3'-triiodothyronine (T3) to 3,3'-diiodothyronine (3,3'-T2) via IRD. Catalyzes the deiodination of 3-T1 to L-thyronine (T0) via outer-ring deiodination (ORD). Catalyzes the tyrosyl ring deiodinations of 3,3',5,5'-tetraiodothyronamine, 3,3',5'-triiodothyronamine, 3,5,3'-triiodothyronamine, 3,5-diiodothyronamine, 3,3'-diiodothyronamine and 3-iodothyronamine. The sequence is that of Thyroxine 5-deiodinase (DIO3) from Sus scrofa (Pig).